Consider the following 545-residue polypeptide: Protein BTN1 (545 aa).

The tract at residues 23-49 is disordered; sequence AHSSASDPRRTMVTNTSESPLASRQAT. Over residues 34-49 the composition is skewed to polar residues; it reads MVTNTSESPLASRQAT. The next 5 membrane-spanning stretches (helical) occupy residues 66–86, 97–117, 127–147, 205–225, and 234–254; these read AFFL…TAAL, LVSF…PYFL, VWSC…FPAL, VGWF…AWWV, and GMAI…IILP. Residues 276–304 form a disordered region; it reads TEDDAVERSSSDDQPTTANDDRQDSTIHI. The next 3 helical transmembrane spans lie at 322–342, 408–428, and 440–460; these read MALL…VYAM, LLWL…TESL, and LVIV…VSVF.

Belongs to the battenin family.

The protein resides in the vacuole membrane. Functionally, involved in vacuolar transport and vacuole pH homeostasis. Also required for cytokinesis. The polypeptide is Protein BTN1 (BTN1) (Mycosarcoma maydis (Corn smut fungus)).